Here is a 157-residue protein sequence, read N- to C-terminus: Oocyte zinc finger protein XlCOF2 (157 aa).

C2H2-type zinc fingers lie at residues 6-28 (FTCTECGKNFSFTTSFIRHMRIH), 34-56 (YSCADCGKHFSEKMYLQFHQKNP), 79-101 (FTCTECGKCFSLSSYLHRHQRLH), 107-129 (FSCAECGKAFSGKAQLQDHQNTH), and 135-157 (FTCTECGKCFTRKGSLQMHQKIH).

It belongs to the krueppel C2H2-type zinc-finger protein family.

The protein localises to the nucleus. Its function is as follows. May be involved in transcriptional regulation. This chain is Oocyte zinc finger protein XlCOF2, found in Xenopus laevis (African clawed frog).